Consider the following 211-residue polypeptide: Thiamine-phosphate synthase (211 aa).

Residues 40–42 (QLR) and asparagine 72 contribute to the 4-amino-2-methyl-5-(diphosphooxymethyl)pyrimidine site. Aspartate 73 and aspartate 92 together coordinate Mg(2+). Residue serine 111 coordinates 4-amino-2-methyl-5-(diphosphooxymethyl)pyrimidine. 136–138 (TST) contacts 2-[(2R,5Z)-2-carboxy-4-methylthiazol-5(2H)-ylidene]ethyl phosphate. Lysine 139 is a 4-amino-2-methyl-5-(diphosphooxymethyl)pyrimidine binding site. Residues glycine 167 and 187-188 (VS) contribute to the 2-[(2R,5Z)-2-carboxy-4-methylthiazol-5(2H)-ylidene]ethyl phosphate site.

Belongs to the thiamine-phosphate synthase family. Mg(2+) serves as cofactor.

The enzyme catalyses 2-[(2R,5Z)-2-carboxy-4-methylthiazol-5(2H)-ylidene]ethyl phosphate + 4-amino-2-methyl-5-(diphosphooxymethyl)pyrimidine + 2 H(+) = thiamine phosphate + CO2 + diphosphate. The catalysed reaction is 2-(2-carboxy-4-methylthiazol-5-yl)ethyl phosphate + 4-amino-2-methyl-5-(diphosphooxymethyl)pyrimidine + 2 H(+) = thiamine phosphate + CO2 + diphosphate. It carries out the reaction 4-methyl-5-(2-phosphooxyethyl)-thiazole + 4-amino-2-methyl-5-(diphosphooxymethyl)pyrimidine + H(+) = thiamine phosphate + diphosphate. It functions in the pathway cofactor biosynthesis; thiamine diphosphate biosynthesis; thiamine phosphate from 4-amino-2-methyl-5-diphosphomethylpyrimidine and 4-methyl-5-(2-phosphoethyl)-thiazole: step 1/1. In terms of biological role, condenses 4-methyl-5-(beta-hydroxyethyl)thiazole monophosphate (THZ-P) and 2-methyl-4-amino-5-hydroxymethyl pyrimidine pyrophosphate (HMP-PP) to form thiamine monophosphate (TMP). The polypeptide is Thiamine-phosphate synthase (Laribacter hongkongensis (strain HLHK9)).